The following is a 1235-amino-acid chain: Major DNA-binding protein (1235 aa).

Positions 536-584 (GGLDGKGDDGVPGGGAGGGGGRDVSGGPSDGLGGGRGGGGGGDSGGMMG) are disordered. Gly residues predominate over residues 545–584 (GVPGGGAGGGGGRDVSGGPSDGLGGGRGGGGGGDSGGMMG). A Required for filament formation motif is present at residues 846-847 (FW). Positions 1214 to 1226 (GVGGSSGGGGGSG) are enriched in gly residues. A disordered region spans residues 1214–1235 (GVGGSSGGGGGSGLLPAKRSRL). A required for nuclear localization region spans residues 1232–1235 (RSRL).

The protein belongs to the herpesviridae major DNA-binding protein family. Homooligomers. Forms double-helical filaments necessary for the formation of replication compartments within the host nucleus. Interacts with the origin-binding protein. Interacts with the helicase primase complex; this interaction stimulates primer synthesis activity of the helicase-primase complex. Interacts with the DNA polymerase. Interacts with the alkaline exonuclease; this interaction increases its nuclease processivity.

Its subcellular location is the host nucleus. Plays several crucial roles in viral infection. Participates in the opening of the viral DNA origin to initiate replication by interacting with the origin-binding protein. May disrupt loops, hairpins and other secondary structures present on ssDNA to reduce and eliminate pausing of viral DNA polymerase at specific sites during elongation. Promotes viral DNA recombination by performing strand-transfer, characterized by the ability to transfer a DNA strand from a linear duplex to a complementary single-stranded DNA circle. Can also catalyze the renaturation of complementary single strands. Additionally, reorganizes the host cell nucleus, leading to the formation of prereplicative sites and replication compartments. This process is driven by the protein which can form double-helical filaments in the absence of DNA. In Homo sapiens (Human), this protein is Major DNA-binding protein.